Here is a 337-residue protein sequence, read N- to C-terminus: Heme A synthase (337 aa).

5 helical membrane passes run 6-26 (ITKW…IGGI), 87-107 (FIHR…VIYF), 119-139 (LPYI…WYMV), 154-174 (LAFH…QLIK), and 192-212 (LIFS…GALV). His256 contacts heme. Transmembrane regions (helical) follow at residues 258–278 (LVGY…LKIE), 285–305 (IAYF…ITLL), and 308–328 (VPII…SVII). His316 is a binding site for heme.

The protein belongs to the COX15/CtaA family. Type 2 subfamily. In terms of assembly, interacts with CtaB. Heme b serves as cofactor.

It is found in the cell membrane. The catalysed reaction is Fe(II)-heme o + 2 A + H2O = Fe(II)-heme a + 2 AH2. It functions in the pathway porphyrin-containing compound metabolism; heme A biosynthesis; heme A from heme O: step 1/1. In terms of biological role, catalyzes the conversion of heme O to heme A by two successive hydroxylations of the methyl group at C8. The first hydroxylation forms heme I, the second hydroxylation results in an unstable dihydroxymethyl group, which spontaneously dehydrates, resulting in the formyl group of heme A. This Rickettsia rickettsii (strain Iowa) protein is Heme A synthase.